Here is a 449-residue protein sequence, read N- to C-terminus: MFS-type transporter 1 (449 aa).

A compositionally biased stretch (basic and acidic residues) spans 1-37 (MTHSSSNEHEKEDDRRASDDMMDRDDQNAKEEQDVSK). The disordered stretch occupies residues 1–43 (MTHSSSNEHEKEDDRRASDDMMDRDDQNAKEEQDVSKDAPPVN). The next 6 helical transmembrane spans lie at 61-81 (VAGG…IGIF), 97-117 (TISW…LVVG), 127-147 (YILL…SLST), 152-172 (ILLS…TPAV), 185-205 (LANG…PIMF), and 212-232 (VGFP…LIIA). N-linked (GlcNAc...) asparagine glycosylation occurs at asparagine 233. Helical transmembrane passes span 262-282 (LLTT…INYI), 298-318 (YLIP…GFVA), 326-346 (VHTF…LPAA), 349-369 (APII…VAIL), 390-410 (FGVL…FVAH), and 420-440 (IWTG…RISL).

Belongs to the major facilitator superfamily. Monocarboxylate porter (TC 2.A.1.13) family.

It is found in the cell membrane. It carries out the reaction erythrostominone(in) = erythrostominone(out). The catalysed reaction is deoxyerythrostominone(in) = deoxyerythrostominone(out). The enzyme catalyses epierythrostominol(in) = epierythrostominol(out). It catalyses the reaction deoxyerythrostominol(in) = deoxyerythrostominol(out). In terms of biological role, MFS-type transporter that mediates the secretion of the 4 major naphthoquinone derivatives produced, erythrostominone (NQ1), deoxyerythrostominone (NQ2), epierythrostominol (NQ4), and deoxyerythrostominol (NQ5), as well as of 3 newly identified naphthoquinone derivatives termed NQ7, NQ8 and NQ9. In Ophiocordyceps sp. (strain BCC 1869) (Entomopathogenic fungus), this protein is MFS-type transporter 1.